A 335-amino-acid polypeptide reads, in one-letter code: UPF0353 protein BCG_1543 (335 aa).

2 helical membrane passes run 18-38 and 67-87; these read WFFL…LMQL and VPAI…AGPT. Positions 98–294 constitute a VWFA domain; the sequence is VVMLVIDVSQ…AELRAVYSSL (197 aa). Residues 309 to 329 traverse the membrane as a helical segment; that stretch reads VGWLRLGALALALAALAALLI.

The protein belongs to the UPF0353 family.

It localises to the cell membrane. This Mycobacterium bovis (strain BCG / Pasteur 1173P2) protein is UPF0353 protein BCG_1543.